The following is a 373-amino-acid chain: GPN-loop GTPase 1 (373 aa).

A2 carries the N-acetylalanine modification. 29–34 is a binding site for GTP; the sequence is GSGKTT. The Gly-Pro-Asn (GPN)-loop; involved in dimer interface motif lies at 86-88; the sequence is GPN. 189-192 provides a ligand contact to GTP; sequence NKTD. S301, S312, and S314 each carry phosphoserine. A disordered region spans residues 304-373; that stretch reads LDTGTATGSS…SMAQYWKKNK (70 aa). At T328 the chain carries Phosphothreonine. A compositionally biased stretch (acidic residues) spans 330–342; that stretch reads DEEDEEADSDTDD. Residue S338 is modified to Phosphoserine. Position 340 is a phosphothreonine (T340). The segment covering 343–355 has biased composition (basic and acidic residues); the sequence is IDHRVTEESREEP.

The protein belongs to the GPN-loop GTPase family. As to quaternary structure, heterodimer with GPN3. Binds to RNA polymerase II (RNAPII). Interacts directly with RNAPII subunits RPB4 and RPB7 and the CTD of RPB1. Interacts with XPA.

It is found in the cytoplasm. It localises to the nucleus. Functionally, small GTPase required for proper nuclear import of RNA polymerase II (RNAPII). May act at an RNAP assembly step prior to nuclear import. Forms an interface between the RNA polymerase II enzyme and chaperone/scaffolding proteins, suggesting that it is required to connect RNA polymerase II to regulators of protein complex formation. May be involved in nuclear localization of XPA. The chain is GPN-loop GTPase 1 from Bos taurus (Bovine).